A 717-amino-acid chain; its full sequence is Polyribonucleotide nucleotidyltransferase (717 aa).

Mg(2+) contacts are provided by Asp486 and Asp492. Positions 553-612 (PKIVQLQIDIDKISLVIGSTGKTVKAITDEFEVRVQIEQDGRITLFGTDNLKMQKAKAKI) constitute a KH domain. Residues 622–715 (GEIYDGIVKK…KFGKIELELA (94 aa)) form the S1 motif domain. The interval 650–681 (SNRSRSRDDRYGSDIRHSRYSNRNSRYGRDNR) is disordered. Positions 654–666 (RSRDDRYGSDIRH) are enriched in basic and acidic residues.

Belongs to the polyribonucleotide nucleotidyltransferase family. Mg(2+) serves as cofactor.

The protein localises to the cytoplasm. It carries out the reaction RNA(n+1) + phosphate = RNA(n) + a ribonucleoside 5'-diphosphate. Functionally, involved in mRNA degradation. Catalyzes the phosphorolysis of single-stranded polyribonucleotides processively in the 3'- to 5'-direction. This Borrelia duttonii (strain Ly) protein is Polyribonucleotide nucleotidyltransferase.